A 232-amino-acid chain; its full sequence is 2,3,4,5-tetrahydropyridine-2,6-dicarboxylate N-acetyltransferase (232 aa).

It belongs to the transferase hexapeptide repeat family. DapH subfamily.

It catalyses the reaction (S)-2,3,4,5-tetrahydrodipicolinate + acetyl-CoA + H2O = L-2-acetamido-6-oxoheptanedioate + CoA. The protein operates within amino-acid biosynthesis; L-lysine biosynthesis via DAP pathway; LL-2,6-diaminopimelate from (S)-tetrahydrodipicolinate (acetylase route): step 1/3. Catalyzes the transfer of an acetyl group from acetyl-CoA to tetrahydrodipicolinate. This chain is 2,3,4,5-tetrahydropyridine-2,6-dicarboxylate N-acetyltransferase, found in Streptococcus pneumoniae (strain CGSP14).